The sequence spans 427 residues: MQNSLDLKPISHVNGTVCLPGSKSISNRVLLLSSIAKGTTCLTNLLNSHDTQHMLNALKKLGVRYNLSDDKKTCHVQGIGGPFHLSEAISLYLGNAGTAIRPLLSVLSLHKNNILLNGDDRMHERPIGDLVDALIQGGAVIEYKKNKGYPPICTKGGFLGGSIFLNGNISSQFLTSLLISTPLALKDTTIFIKGNLVSKPYIDITLNLIKIFGVNIEHDSYNVFYIKGKQQYKTPGKYTIEGDASSASYFLAAAAIKGGSVKVTGVGKKSIQGDIEFANILEKMGATIFWEDYSITCTRNKLNAIDLDMNHIPDAAMTVAILALFSKGTTIIRNIYNWRVKETDRLSAMTIELRKIGAIVEEGRDFLSISPPIFFQYSSIETYNDHRMAMCFSLISLSGVGVNILNPNCISKTFPSYFKDFLSISKI.

3-phosphoshikimate contacts are provided by Lys23, Ser24, and Arg28. A phosphoenolpyruvate-binding site is contributed by Lys23. 2 residues coordinate phosphoenolpyruvate: Gly97 and Arg125. 3-phosphoshikimate is bound by residues Ser170, Ser171, Gln172, Ser198, Asp314, Asn337, and Lys341. Residue Gln172 participates in phosphoenolpyruvate binding. The active-site Proton acceptor is Asp314. Arg345, Arg387, and Lys412 together coordinate phosphoenolpyruvate.

It belongs to the EPSP synthase family. Monomer.

It is found in the cytoplasm. The catalysed reaction is 3-phosphoshikimate + phosphoenolpyruvate = 5-O-(1-carboxyvinyl)-3-phosphoshikimate + phosphate. It participates in metabolic intermediate biosynthesis; chorismate biosynthesis; chorismate from D-erythrose 4-phosphate and phosphoenolpyruvate: step 6/7. Functionally, catalyzes the transfer of the enolpyruvyl moiety of phosphoenolpyruvate (PEP) to the 5-hydroxyl of shikimate-3-phosphate (S3P) to produce enolpyruvyl shikimate-3-phosphate and inorganic phosphate. The protein is 3-phosphoshikimate 1-carboxyvinyltransferase of Buchnera aphidicola subsp. Acyrthosiphon pisum (strain Tuc7).